Consider the following 144-residue polypeptide: Large ribosomal subunit protein uL15 (144 aa).

Residues 1-56 (MELNTLAPAPGAKSSKKRVGRGIGSGLGKTGGRGHKGQKSRSGGSVKPGFEGGQMP) form a disordered region. Gly residues predominate over residues 21 to 31 (RGIGSGLGKTG).

Belongs to the universal ribosomal protein uL15 family. Part of the 50S ribosomal subunit.

In terms of biological role, binds to the 23S rRNA. The protein is Large ribosomal subunit protein uL15 of Idiomarina loihiensis (strain ATCC BAA-735 / DSM 15497 / L2-TR).